Consider the following 104-residue polypeptide: MYAIISVGNRQYKVTQDQEFLTEKTGKNAGESFDAKVLLFAESNNKVHIGQPELKTARVSLKVLEDVKGDKIHGYVYKRRKNYQKAWGHRQQLQKVKVVSLSAV.

The protein belongs to the bacterial ribosomal protein bL21 family. As to quaternary structure, part of the 50S ribosomal subunit. Contacts protein L20.

This protein binds to 23S rRNA in the presence of protein L20. The protein is Large ribosomal subunit protein bL21 of Leptospira interrogans serogroup Icterohaemorrhagiae serovar copenhageni (strain Fiocruz L1-130).